A 106-amino-acid chain; its full sequence is Biogenesis of lysosome-related organelles complex 1 subunit 4 (106 aa).

Residues 53–106 (THSEGLSEQLKMTEKNILEMENLFDQIDQLCLFVQKAKSDLDKLEKLYNVVDRQ) adopt a coiled-coil conformation.

The protein belongs to the BLOC1S4 family. In terms of assembly, component of the biogenesis of lysosome-related organelles complex-1 (BLOC-1) composed at least of blos-1, blos-2, blos-4, dsbn-1, glo-2, mutd-1 and snpn-1. Interacts with glo-2.

Functionally, component of the biogenesis of lysosome-related organelles complex-1 (BLOC-1) involved in gut granule biogenesis. The chain is Biogenesis of lysosome-related organelles complex 1 subunit 4 (blos-4) from Caenorhabditis elegans.